The chain runs to 219 residues: Cytidylate kinase (219 aa).

G15–T23 contacts ATP.

It belongs to the cytidylate kinase family. Type 1 subfamily.

It is found in the cytoplasm. The catalysed reaction is CMP + ATP = CDP + ADP. The enzyme catalyses dCMP + ATP = dCDP + ADP. The protein is Cytidylate kinase of Brucella abortus (strain S19).